The chain runs to 204 residues: Somatotropin (204 aa).

An N-terminal signal peptide occupies residues 1-17 (MDRAVLLLSVLSLGVSS). Gln18 carries the pyrrolidone carboxylic acid modification. His35 contacts Zn(2+). Residues Cys69 and Cys177 are joined by a disulfide bond. Glu186 provides a ligand contact to Zn(2+). An intrachain disulfide couples Cys194 to Cys202.

The protein belongs to the somatotropin/prolactin family.

It is found in the secreted. Growth hormone plays an important role in growth control and is involved in the regulation of several anabolic processes. Implicated as an osmoregulatory substance important for seawater adaptation. The sequence is that of Somatotropin (gh) from Morone saxatilis (Striped bass).